Consider the following 160-residue polypeptide: Lipoprotein signal peptidase (160 aa).

3 helical membrane-spanning segments follow: residues 6-26 (VWSS…IKYL), 58-78 (LAWL…AFVL), and 95-115 (FALV…HGYV). Active-site residues include aspartate 117 and aspartate 135. The helical transmembrane segment at 127–147 (SFAVFNLADAFITIGAGLIIL) threads the bilayer.

The protein belongs to the peptidase A8 family.

Its subcellular location is the cell inner membrane. It carries out the reaction Release of signal peptides from bacterial membrane prolipoproteins. Hydrolyzes -Xaa-Yaa-Zaa-|-(S,diacylglyceryl)Cys-, in which Xaa is hydrophobic (preferably Leu), and Yaa (Ala or Ser) and Zaa (Gly or Ala) have small, neutral side chains.. It participates in protein modification; lipoprotein biosynthesis (signal peptide cleavage). Functionally, this protein specifically catalyzes the removal of signal peptides from prolipoproteins. The protein is Lipoprotein signal peptidase of Brucella abortus (strain S19).